The sequence spans 611 residues: Actin-related protein 5 (611 aa).

Coiled-coil stretches lie at residues 290–329 (TLTS…LDRL) and 355–386 (SAEE…NIEV).

Belongs to the actin family. ARP5 subfamily. As to quaternary structure, component of the chromatin remodeling INO80 complex.

The protein localises to the nucleus. Proposed core component of the chromatin remodeling INO80 complex which is involved in transcriptional regulation, DNA replication and probably DNA repair. This chain is Actin-related protein 5 (ACTR5), found in Gallus gallus (Chicken).